Here is a 98-residue protein sequence, read N- to C-terminus: Large ribosomal subunit protein eL21 (98 aa).

Residues 1 to 24 show a composition bias toward basic residues; sequence MVKKAHSFRRKTRGKLSKHPRRRG. Positions 1-27 are disordered; sequence MVKKAHSFRRKTRGKLSKHPRRRGLPP.

Belongs to the eukaryotic ribosomal protein eL21 family. Part of the 50S ribosomal subunit.

The polypeptide is Large ribosomal subunit protein eL21 (Thermococcus kodakarensis (strain ATCC BAA-918 / JCM 12380 / KOD1) (Pyrococcus kodakaraensis (strain KOD1))).